The following is a 172-amino-acid chain: Nicotinamide-nucleotide adenylyltransferase (172 aa).

The protein belongs to the archaeal NMN adenylyltransferase family.

Its subcellular location is the cytoplasm. The catalysed reaction is beta-nicotinamide D-ribonucleotide + ATP + H(+) = diphosphate + NAD(+). Its pathway is cofactor biosynthesis; NAD(+) biosynthesis; NAD(+) from nicotinamide D-ribonucleotide: step 1/1. This chain is Nicotinamide-nucleotide adenylyltransferase, found in Methanococcus aeolicus (strain ATCC BAA-1280 / DSM 17508 / OCM 812 / Nankai-3).